A 357-amino-acid polypeptide reads, in one-letter code: Protein FAM118A (357 aa).

Residue Met1 is modified to N-acetylmethionine. Residues 30–46 (LLLVIGTGVSAAVAPGI) traverse the membrane as a helical segment. At Ser311 the chain carries Phosphoserine.

It belongs to the FAM118 family.

The protein localises to the membrane. The chain is Protein FAM118A (Fam118a) from Mus musculus (Mouse).